The following is a 253-amino-acid chain: Uroplakin-3b-like protein 1 (253 aa).

Residues 1–26 (MGLGRGQSPLLMALLLLLACLQMGMS) form the signal peptide. Over 27–194 (LERISYVPQL…PGPQTAGTVV (168 aa)) the chain is Extracellular. Residues N78 and N130 are each glycosylated (N-linked (GlcNAc...) asparagine). The chain crosses the membrane as a helical span at residues 195-215 (IIAILSVLLAVLLAALLALLI). Over 216 to 253 (FTWYDTCGSTPISGPGELVFVRKYDTHHMSRPSTVGGS) the chain is Cytoplasmic.

Belongs to the uroplakin-3 family.

The protein localises to the membrane. The polypeptide is Uroplakin-3b-like protein 1 (Bos taurus (Bovine)).